A 265-amino-acid chain; its full sequence is Type-1Ba cytolytic delta-endotoxin (265 aa).

This sequence belongs to the cyt1/cyt2 endotoxin family. Active after proteolytic processing.

Kills the larvae of dipteran insects by making pores in the epithelial cell membrane of the insect midgut. The protein is Type-1Ba cytolytic delta-endotoxin (cyt1Ba1) of Bacillus thuringiensis subsp. neoleoensis.